We begin with the raw amino-acid sequence, 199 residues long: Adenylyl-sulfate kinase (199 aa).

35–42 (GLSGSGKS) serves as a coordination point for ATP. Serine 109 serves as the catalytic Phosphoserine intermediate.

The protein belongs to the APS kinase family.

It catalyses the reaction adenosine 5'-phosphosulfate + ATP = 3'-phosphoadenylyl sulfate + ADP + H(+). It participates in sulfur metabolism; hydrogen sulfide biosynthesis; sulfite from sulfate: step 2/3. Its function is as follows. Catalyzes the synthesis of activated sulfate. The protein is Adenylyl-sulfate kinase of Clostridium kluyveri (strain ATCC 8527 / DSM 555 / NBRC 12016 / NCIMB 10680 / K1).